Consider the following 107-residue polypeptide: Precursor of CEP14 (107 aa).

An N-terminal signal peptide occupies residues 1–21; it reads MAVRLIPTIWLFIVFAVIVSA. Residues 22-92 constitute a propeptide that is removed on maturation; that stretch reads LPSLVSSRKL…GKLRSRHLST (71 aa). Asn-39 carries an N-linked (GlcNAc...) asparagine glycan. The disordered stretch occupies residues 43–76; it reads REEEKSHMPHVTKTSTLSALPKGKIPNSTPSKKG. Hydroxyproline occurs at positions 101 and 103.

This sequence belongs to the C-terminally encoded plant signaling peptide (CEP) family. In terms of assembly, interacts with CEP receptors (e.g. CEPR1 and CEPR2). The mature small signaling peptide is generated by proteolytic processing of the longer precursor.

The protein localises to the secreted. It is found in the extracellular space. It localises to the apoplast. In terms of biological role, extracellular signaling peptide that may regulate primary root growth rate and systemic nitrogen (N)-demand signaling. The chain is Precursor of CEP14 from Arabidopsis thaliana (Mouse-ear cress).